We begin with the raw amino-acid sequence, 358 residues long: UDP-N-acetylglucosamine--N-acetylmuramyl-(pentapeptide) pyrophosphoryl-undecaprenol N-acetylglucosamine transferase (358 aa).

UDP-N-acetyl-alpha-D-glucosamine is bound by residues 13-15 (TGG), Asn-125, Arg-162, Ser-190, Ile-244, 263-268 (ALTVAE), and Gln-289.

This sequence belongs to the glycosyltransferase 28 family. MurG subfamily.

It localises to the cell inner membrane. The enzyme catalyses di-trans,octa-cis-undecaprenyl diphospho-N-acetyl-alpha-D-muramoyl-L-alanyl-D-glutamyl-meso-2,6-diaminopimeloyl-D-alanyl-D-alanine + UDP-N-acetyl-alpha-D-glucosamine = di-trans,octa-cis-undecaprenyl diphospho-[N-acetyl-alpha-D-glucosaminyl-(1-&gt;4)]-N-acetyl-alpha-D-muramoyl-L-alanyl-D-glutamyl-meso-2,6-diaminopimeloyl-D-alanyl-D-alanine + UDP + H(+). Its pathway is cell wall biogenesis; peptidoglycan biosynthesis. Its function is as follows. Cell wall formation. Catalyzes the transfer of a GlcNAc subunit on undecaprenyl-pyrophosphoryl-MurNAc-pentapeptide (lipid intermediate I) to form undecaprenyl-pyrophosphoryl-MurNAc-(pentapeptide)GlcNAc (lipid intermediate II). The polypeptide is UDP-N-acetylglucosamine--N-acetylmuramyl-(pentapeptide) pyrophosphoryl-undecaprenol N-acetylglucosamine transferase (Halorhodospira halophila (strain DSM 244 / SL1) (Ectothiorhodospira halophila (strain DSM 244 / SL1))).